The following is a 300-amino-acid chain: Lysophosphatidic acid:oleoyl-CoA acyltransferase 1 (300 aa).

A helical transmembrane segment spans residues 33 to 53; it reads LLGILGVKTIIMLPLIMLYLL. The HXXXXD motif motif lies at 101 to 106; it reads CTSPLD.

It belongs to the 1-acyl-sn-glycerol-3-phosphate acyltransferase family.

The protein resides in the lipid droplet. Its subcellular location is the endoplasmic reticulum membrane. It catalyses the reaction a 1-acyl-sn-glycero-3-phosphate + an acyl-CoA = a 1,2-diacyl-sn-glycero-3-phosphate + CoA. The catalysed reaction is 1-hexadecanoyl-sn-glycero-3-phosphate + (9Z)-octadecenoyl-CoA = 1-hexadecanoyl-2-(9Z-octadecenoyl)-sn-glycero-3-phosphate + CoA. Functionally, acyl-CoA-dependent lysophosphatidic acid acyltransferase with preference for oleoyl-CoA. Involved in triacylglyceride homeostasis and lipid droplet formation. Involved in vacuolar protein sorting. The sequence is that of Lysophosphatidic acid:oleoyl-CoA acyltransferase 1 from Saccharomyces cerevisiae (strain ATCC 204508 / S288c) (Baker's yeast).